The primary structure comprises 225 residues: Dimerizing cyclase tstC (225 aa).

The first 19 residues, 1–19, serve as a signal peptide directing secretion; that stretch reads MRLSTLSSLLLGSSSIVFA. Residues N146, N195, and N217 are each glycosylated (N-linked (GlcNAc...) asparagine).

This sequence belongs to the dimerizing cyclase tstC family.

It catalyses the reaction 2 [4-(deca-1,8-diyl)-2,5-dioxo-2,5-dihydro-3-furanyl]acetate + H(+) = 2-[(1R,8S,14R,15R)-11-hydroxy-14,15-bis[(6E)-oct-6-en-1-yl]-3,5,9-trioxo-4,10-dioxatetracyclo[9.4.0.0(2,6).0(8,12)]pentadeca-2(6),12-dien-8-yl]acetate + CO2. The protein operates within secondary metabolite biosynthesis. In terms of biological role, dimerizing cyclase; part of the gene cluster that mediates the biosynthesis of the antihypercholesterolemic agents phomoidrides which are dimeric anhydrides. Within the pathway, tstC produces the bicyclo[4.3.1]deca-1,6-diene core of phomoidrides via the dimerization of the monomeric anhydrides leading to prephomoidride. The pathway begins with the highly reducing polyketide synthase tstA that catalyzes the formation of a C12-fatty acyl-ACP, starting from one acetate and 5 malonate units. The hydrolase tstM is involved in the release of the C12-fatty acyl chain from phiA. The alkylcitrate synthase (ACS) tstJ and the alkylcitrate dehydratase (ACDH) tstI then give rise to decarboxylated monomeric anhydrides by coupling the C12-fatty acyl chain with oxalacetic acid. The cyclase tstC is responsible for the dimerization of the monomeric anhydrides which leads to the production of prephomoidride that contains the characteristic bicyclo[4.3.1]deca-1,6-diene system of phomoidrides. Iterative oxidation catalyzed by the alpha-ketoglutarate-dependent dioxygenase tstK produced then phomoidride A. Finally, the methyltransferase tstE converts phomoidride A to phomoidride B via an acetalization reaction. The phosphatidylethanolamine-binding protein tstB and tstN are not essential for dimerization and their functions have still to be determined. The polypeptide is Dimerizing cyclase tstC (Talaromyces stipitatus (strain ATCC 10500 / CBS 375.48 / QM 6759 / NRRL 1006) (Penicillium stipitatum)).